The primary structure comprises 205 residues: DNA-directed RNA polymerases IV and V subunit 4 (205 aa).

The tract at residues 1-79 (MSEKGGKGLK…TKSSKNSLHS (79 aa)) is disordered. Residues 48-60 (NVSSDQQPFQSSA) show a composition bias toward polar residues.

Belongs to the eukaryotic RPB4 RNA polymerase subunit family. In terms of assembly, component of the RNA polymerase IV and V complexes. Interacts with NRPD1 and NRPE1. In terms of tissue distribution, expressed in shoot meristematic region and in root tips. Detected in cotyledons, flowers and young leaves.

It localises to the nucleus. DNA-dependent RNA polymerase catalyzes the transcription of DNA into RNA using the four ribonucleoside triphosphates as substrates. Component of RNA polymerases IV and V which mediate short-interfering RNAs (siRNA) accumulation and subsequent RNA-directed DNA methylation-dependent (RdDM) transcriptional gene silencing (TGS) of endogenous repeated sequences, including transposable elements. Required for the de novo DNA methylation directed by the RdDM pathway. This chain is DNA-directed RNA polymerases IV and V subunit 4 (NRPD4), found in Arabidopsis thaliana (Mouse-ear cress).